Reading from the N-terminus, the 570-residue chain is Mitoguardin 1 (570 aa).

Residues Gly-34–Cys-54 traverse the membrane as a helical segment.

This sequence belongs to the mitoguardin family. As to quaternary structure, homodimer and heterodimer; forms heterodimers with miga2.

The protein resides in the mitochondrion outer membrane. In terms of biological role, regulator of mitochondrial fusion: acts by forming homo- and heterodimers at the mitochondrial outer membrane and facilitating the formation of pld6/MitoPLD dimers. May act by regulating phospholipid metabolism via pld6/MitoPLD. The polypeptide is Mitoguardin 1 (Xenopus laevis (African clawed frog)).